The primary structure comprises 456 residues: N(6)-adenosine-methyltransferase non-catalytic subunit METTL14 (456 aa).

Residues 45-76 (AETRETCRASYDTSAPNAKRKYQDEGETDEDK) are disordered. Interaction with METTL3 stretches follow at residues 135 to 136 (RD) and 237 to 238 (SG). A positively charged region required for RNA-binding region spans residues 245 to 254 (RVCLRKWGYR). Interaction with METTL3 stretches follow at residues 255–258 (RCED) and 278–287 (KAVFQRTKEH). The segment at 297-298 (KR) is positively charged region required for RNA-binding. The segment at 308–312 (NVDID) is interaction with METTL3. The segment at 393–456 (ERLRPKSPPP…GAHRGGFPPR (64 aa)) is disordered. Residue S399 is modified to Phosphoserine. Residues 409–423 (GGGAPRGGGRGGTSA) are compositionally biased toward gly residues. Residues 425–440 (RGRERNRSNFRGERGG) are compositionally biased toward basic and acidic residues. The segment covering 441-450 (FRGGRGGAHR) has biased composition (gly residues).

Belongs to the MT-A70-like family. As to quaternary structure, heterodimer; heterodimerizes with METTL3 to form an antiparallel heterodimer that constitutes an active methyltransferase. Component of the WMM complex, a N6-methyltransferase complex composed of a catalytic subcomplex, named MAC, and of an associated subcomplex, named MACOM. The MAC subcomplex is composed of METTL3 and METTL14. The MACOM subcomplex is composed of WTAP, ZC3H13, CBLL1/HAKAI, VIRMA, and, in some cases of RBM15 (RBM15 or RBM15B).

The protein localises to the nucleus. Its function is as follows. The METTL3-METTL14 heterodimer forms a N6-methyltransferase complex that methylates adenosine residues at the N(6) position of some mRNAs and regulates the circadian clock, differentiation of embryonic stem cells and cortical neurogenesis. In the heterodimer formed with METTL3, METTL14 constitutes the RNA-binding scaffold that recognizes the substrate rather than the catalytic core. N6-methyladenosine (m6A), which takes place at the 5'-[AG]GAC-3' consensus sites of some mRNAs, plays a role in mRNA stability and processing. M6A acts as a key regulator of mRNA stability by promoting mRNA destabilization and degradation. In embryonic stem cells (ESCs), m6A methylation of mRNAs encoding key naive pluripotency-promoting transcripts results in transcript destabilization. M6A regulates spermatogonial differentiation and meiosis and is essential for male fertility and spermatogenesis. M6A also regulates cortical neurogenesis: m6A methylation of transcripts related to transcription factors, neural stem cells, the cell cycle and neuronal differentiation during brain development promotes their destabilization and decay, promoting differentiation of radial glial cells. The polypeptide is N(6)-adenosine-methyltransferase non-catalytic subunit METTL14 (METTL14) (Bos taurus (Bovine)).